Here is a 178-residue protein sequence, read N- to C-terminus: Gamma-crystallin S (178 aa).

At Ser2 the chain carries N-acetylserine. Residues 2–5 form an N-terminal arm region; sequence SKTG. 2 Beta/gamma crystallin 'Greek key' domains span residues 6-44 and 45-87; these read GKISFYEDRNFQGRRYDCDCDCADFRSYLSRCNSIRVEG and GTWA…RAVH. The interval 88–93 is connecting peptide; it reads LSSGGQ. Beta/gamma crystallin 'Greek key' domains follow at residues 94 to 134 and 135 to 177; these read AKIQ…KVVE and GTWI…RRIV.

This sequence belongs to the beta/gamma-crystallin family. In terms of assembly, monomer.

In terms of biological role, crystallins are the dominant structural components of the vertebrate eye lens. The chain is Gamma-crystallin S (Crygs) from Mus musculus (Mouse).